The primary structure comprises 152 residues: Large ribosomal subunit protein bL9 (152 aa).

The protein belongs to the bacterial ribosomal protein bL9 family.

Its function is as follows. Binds to the 23S rRNA. The polypeptide is Large ribosomal subunit protein bL9 (Thermosynechococcus vestitus (strain NIES-2133 / IAM M-273 / BP-1)).